A 292-amino-acid chain; its full sequence is NAD kinase (292 aa).

The active-site Proton acceptor is Asp-73. Residues 73–74 (DG), 147–148 (NE), His-158, Arg-175, Asp-177, 188–193 (TAYSLS), and Gln-247 contribute to the NAD(+) site.

This sequence belongs to the NAD kinase family. It depends on a divalent metal cation as a cofactor.

It localises to the cytoplasm. It carries out the reaction NAD(+) + ATP = ADP + NADP(+) + H(+). In terms of biological role, involved in the regulation of the intracellular balance of NAD and NADP, and is a key enzyme in the biosynthesis of NADP. Catalyzes specifically the phosphorylation on 2'-hydroxyl of the adenosine moiety of NAD to yield NADP. The protein is NAD kinase of Salmonella agona (strain SL483).